The sequence spans 350 residues: S-adenosylmethionine:tRNA ribosyltransferase-isomerase (350 aa).

The protein belongs to the QueA family. Monomer.

The protein resides in the cytoplasm. It catalyses the reaction 7-aminomethyl-7-carbaguanosine(34) in tRNA + S-adenosyl-L-methionine = epoxyqueuosine(34) in tRNA + adenine + L-methionine + 2 H(+). It participates in tRNA modification; tRNA-queuosine biosynthesis. Its function is as follows. Transfers and isomerizes the ribose moiety from AdoMet to the 7-aminomethyl group of 7-deazaguanine (preQ1-tRNA) to give epoxyqueuosine (oQ-tRNA). The sequence is that of S-adenosylmethionine:tRNA ribosyltransferase-isomerase from Vibrio campbellii (strain ATCC BAA-1116).